We begin with the raw amino-acid sequence, 48 residues long: Probable antitoxin PhoAT (48 aa).

It belongs to the PhoAT antitoxin family. As to quaternary structure, interacts with toxin PhoH2.

Its function is as follows. Probable antitoxin component of a type II toxin-antitoxin (TA) system. The probable cognate antitoxin is PhoAT; the toxin gene can be expressed in the absence of the antitoxin gene in M.smegmatis strain mc(2)155. This is Probable antitoxin PhoAT from Mycolicibacterium smegmatis (strain ATCC 700084 / mc(2)155) (Mycobacterium smegmatis).